The following is a 377-amino-acid chain: Nucleoside diphosphate kinase homolog 7 (377 aa).

Residues 3–91 enclose the DM10 domain; sequence HSERFVFIAE…YTARQLGSKK (89 aa).

It belongs to the NDK family. Component of sperm flagellar doublet microtubules. Component of the gamma-tubulin ring complex. As to expression, expressed in trachea multiciliated cells.

Its subcellular location is the cytoplasm. The protein resides in the cytoskeleton. It localises to the microtubule organizing center. It is found in the centrosome. The protein localises to the nucleus. Its subcellular location is the spindle. The protein resides in the cilium axoneme. It localises to the flagellum axoneme. It is found in the cell projection. The protein localises to the cilium. Possesses an intrinsic kinase activity. Displays 3'-5' exonuclease activity with a preference for single-stranded DNA. Does not seem to have nucleoside diphosphate kinase activity. Functional component of the gamma-tubulin ring complex, implicated in the regulation of the microtubule-nucleating activity of the gamma-tubulin ring complex in centrosomes, in a kinase activity-dependent manner. Part of the dynein-decorated doublet microtubules (DMTs) in cilia axoneme, which is required for motile cilia beating. This Bos taurus (Bovine) protein is Nucleoside diphosphate kinase homolog 7 (NME7).